A 286-amino-acid polypeptide reads, in one-letter code: Protein PXR1 (286 aa).

Residues 1-20 (MGLAGTKVKQRFGLDPRNTS) form a disordered region. Positions 25–71 (KSRFGHRYLESMGWAPGKGLGLVEHATTTHVKVSVKDDTVGLGAKLA) constitute a G-patch domain. The disordered stretch occupies residues 148-255 (EDESEVNFKS…PRKHDQISNV (108 aa)). Over residues 168–198 (PSRDSTSHAKRMRGDESKKSTRDQSKQERKE) the composition is skewed to basic and acidic residues. Over residues 199-230 (KKIKTEKKEKKEKKEKKEKKEKKEKKEKKEKK) the composition is skewed to basic residues.

It belongs to the PINX1 family.

It is found in the nucleus. Its subcellular location is the nucleolus. Its function is as follows. Involved in rRNA-processing at A0, A1 and A2 sites and negatively regulates telomerase. The sequence is that of Protein PXR1 (PXR1) from Meyerozyma guilliermondii (strain ATCC 6260 / CBS 566 / DSM 6381 / JCM 1539 / NBRC 10279 / NRRL Y-324) (Yeast).